We begin with the raw amino-acid sequence, 232 residues long: tRNA (guanine-N(1)-)-methyltransferase (232 aa).

S-adenosyl-L-methionine is bound by residues glycine 112 and 132–137; that span reads IGDYVL.

Belongs to the RNA methyltransferase TrmD family. As to quaternary structure, homodimer.

It is found in the cytoplasm. It catalyses the reaction guanosine(37) in tRNA + S-adenosyl-L-methionine = N(1)-methylguanosine(37) in tRNA + S-adenosyl-L-homocysteine + H(+). In terms of biological role, specifically methylates guanosine-37 in various tRNAs. This Anaplasma phagocytophilum (strain HZ) protein is tRNA (guanine-N(1)-)-methyltransferase.